The primary structure comprises 146 residues: 3-hydroxyacyl-[acyl-carrier-protein] dehydratase FabZ (146 aa).

H48 is an active-site residue.

It belongs to the thioester dehydratase family. FabZ subfamily.

The protein localises to the cytoplasm. The catalysed reaction is a (3R)-hydroxyacyl-[ACP] = a (2E)-enoyl-[ACP] + H2O. Its function is as follows. Involved in unsaturated fatty acids biosynthesis. Catalyzes the dehydration of short chain beta-hydroxyacyl-ACPs and long chain saturated and unsaturated beta-hydroxyacyl-ACPs. This chain is 3-hydroxyacyl-[acyl-carrier-protein] dehydratase FabZ, found in Acetivibrio thermocellus (strain ATCC 27405 / DSM 1237 / JCM 9322 / NBRC 103400 / NCIMB 10682 / NRRL B-4536 / VPI 7372) (Clostridium thermocellum).